Consider the following 427-residue polypeptide: Ribosome biogenesis protein WDR12 homolog (427 aa).

Residues 13-97 form a ubiquitin-like (UBL) domain region; sequence LQLHLYTKQK…EDTVELEYVE (85 aa). 7 WD repeats span residues 109–146, 148–190, 197–236, 260–298, 301–339, 345–385, and 389–427; these read LHDD…KLTI, GHIA…NSVE, GHER…DGDS, GHRE…IKSE, GHKS…GTIV, GHTQ…APIF, and GHED…GEQK.

It belongs to the WD repeat WDR12/YTM1 family.

It is found in the nucleus. The protein localises to the nucleolus. Its subcellular location is the nucleoplasm. Required for maturation of ribosomal RNAs and formation of the large ribosomal subunit. The sequence is that of Ribosome biogenesis protein WDR12 homolog from Aedes aegypti (Yellowfever mosquito).